The sequence spans 82 residues: Probable [Fe-S]-dependent transcriptional repressor (82 aa).

C56, C61, C64, and C71 together coordinate iron-sulfur cluster.

It belongs to the FeoC family.

In terms of biological role, may function as a transcriptional regulator that controls feoABC expression. The chain is Probable [Fe-S]-dependent transcriptional repressor from Yersinia enterocolitica serotype O:8 / biotype 1B (strain NCTC 13174 / 8081).